The primary structure comprises 81 residues: Photosystem I iron-sulfur center (81 aa).

4Fe-4S ferredoxin-type domains are found at residues 2–31 (AHSVKIYDTCIGCTQCVRACPTDVLEMIPW) and 39–68 (IASAPRTEDCVGCKRCESACPTDFLSVRVY). Residues cysteine 11, cysteine 14, cysteine 17, cysteine 21, cysteine 48, cysteine 51, cysteine 54, and cysteine 58 each contribute to the [4Fe-4S] cluster site.

In terms of assembly, the eukaryotic PSI reaction center is composed of at least 11 subunits. Requires [4Fe-4S] cluster as cofactor.

It is found in the plastid. The protein localises to the chloroplast thylakoid membrane. The enzyme catalyses reduced [plastocyanin] + hnu + oxidized [2Fe-2S]-[ferredoxin] = oxidized [plastocyanin] + reduced [2Fe-2S]-[ferredoxin]. Its function is as follows. Apoprotein for the two 4Fe-4S centers FA and FB of photosystem I (PSI); essential for photochemical activity. FB is the terminal electron acceptor of PSI, donating electrons to ferredoxin. The C-terminus interacts with PsaA/B/D and helps assemble the protein into the PSI complex. Required for binding of PsaD and PsaE to PSI. PSI is a plastocyanin-ferredoxin oxidoreductase, converting photonic excitation into a charge separation, which transfers an electron from the donor P700 chlorophyll pair to the spectroscopically characterized acceptors A0, A1, FX, FA and FB in turn. This Adiantum capillus-veneris (Maidenhair fern) protein is Photosystem I iron-sulfur center.